The primary structure comprises 502 residues: Glycerol kinase (502 aa).

Thr-14 contacts ADP. Positions 14, 15, and 16 each coordinate ATP. Residue Thr-14 participates in sn-glycerol 3-phosphate binding. An ADP-binding site is contributed by Arg-18. Positions 84, 85, and 136 each coordinate sn-glycerol 3-phosphate. 3 residues coordinate glycerol: Arg-84, Glu-85, and Tyr-136. A Phosphohistidine; by HPr modification is found at His-232. A sn-glycerol 3-phosphate-binding site is contributed by Asp-246. Asp-246 and Gln-247 together coordinate glycerol. ADP-binding residues include Thr-268 and Gly-311. The ATP site is built by Thr-268, Gly-311, Gln-315, and Gly-412. Gly-412 and Asn-416 together coordinate ADP.

This sequence belongs to the FGGY kinase family. In terms of assembly, homotetramer and homodimer (in equilibrium). In terms of processing, the phosphoenolpyruvate-dependent sugar phosphotransferase system (PTS), including enzyme I, and histidine-containing protein (HPr) are required for the phosphorylation, which leads to the activation of the enzyme.

It catalyses the reaction glycerol + ATP = sn-glycerol 3-phosphate + ADP + H(+). It participates in polyol metabolism; glycerol degradation via glycerol kinase pathway; sn-glycerol 3-phosphate from glycerol: step 1/1. Activated by phosphorylation and inhibited by fructose 1,6-bisphosphate (FBP). Functionally, key enzyme in the regulation of glycerol uptake and metabolism. Catalyzes the phosphorylation of glycerol to yield sn-glycerol 3-phosphate. The sequence is that of Glycerol kinase from Streptococcus sanguinis (strain SK36).